Here is a 305-residue protein sequence, read N- to C-terminus: Ribosomal RNA small subunit methyltransferase H (305 aa).

S-adenosyl-L-methionine is bound by residues 33–35 (GGH), D52, D97, and Q104.

It belongs to the methyltransferase superfamily. RsmH family.

Its subcellular location is the cytoplasm. It carries out the reaction cytidine(1402) in 16S rRNA + S-adenosyl-L-methionine = N(4)-methylcytidine(1402) in 16S rRNA + S-adenosyl-L-homocysteine + H(+). Specifically methylates the N4 position of cytidine in position 1402 (C1402) of 16S rRNA. The chain is Ribosomal RNA small subunit methyltransferase H from Campylobacter lari (strain RM2100 / D67 / ATCC BAA-1060).